The sequence spans 1176 residues: DNA-directed RNA polymerase subunit beta (1176 aa).

Residues 13-30 (TDASLHQGRPQSSSNSSV) show a composition bias toward polar residues. The tract at residues 13–35 (TDASLHQGRPQSSSNSSVPGAPN) is disordered.

This sequence belongs to the RNA polymerase beta chain family. As to quaternary structure, the RNAP catalytic core consists of 2 alpha, 1 beta, 1 beta' and 1 omega subunit. When a sigma factor is associated with the core the holoenzyme is formed, which can initiate transcription.

It carries out the reaction RNA(n) + a ribonucleoside 5'-triphosphate = RNA(n+1) + diphosphate. Functionally, DNA-dependent RNA polymerase catalyzes the transcription of DNA into RNA using the four ribonucleoside triphosphates as substrates. The polypeptide is DNA-directed RNA polymerase subunit beta (Mycobacterium ulcerans (strain Agy99)).